We begin with the raw amino-acid sequence, 77 residues long: Acyl carrier protein (77 aa).

The region spanning 1 to 76 is the Carrier domain; it reads MAVFDDVRDV…DVVNYIEKLG (76 aa). Ser36 bears the O-(pantetheine 4'-phosphoryl)serine mark.

Belongs to the acyl carrier protein (ACP) family. Post-translationally, 4'-phosphopantetheine is transferred from CoA to a specific serine of apo-ACP by AcpS. This modification is essential for activity because fatty acids are bound in thioester linkage to the sulfhydryl of the prosthetic group.

The protein localises to the cytoplasm. It participates in lipid metabolism; fatty acid biosynthesis. Carrier of the growing fatty acid chain in fatty acid biosynthesis. The sequence is that of Acyl carrier protein from Campylobacter curvus (strain 525.92).